The sequence spans 749 residues: Soluble starch synthase 2-1, chloroplastic/amyloplastic (749 aa).

The transit peptide at 1–44 (MAAAAVSSLLAPSGSCYSPGCHSCWGPGPGGGRRLPSPRRRPIT) directs the protein to the chloroplast. Lys272 contributes to the ADP-alpha-D-glucose binding site.

The protein belongs to the glycosyltransferase 1 family. Bacterial/plant glycogen synthase subfamily. As to expression, expressed in endosperm, leaves, and weakly in roots.

The protein localises to the plastid. It is found in the amyloplast. Its subcellular location is the chloroplast. The enzyme catalyses [(1-&gt;4)-alpha-D-glucosyl](n) + ADP-alpha-D-glucose = [(1-&gt;4)-alpha-D-glucosyl](n+1) + ADP + H(+). Its pathway is glycan biosynthesis; starch biosynthesis. Its function is as follows. May be involved in starch synthesis in endosperm amyloplasts and contribute to the deposition of transient starch in chloroplasts of leaves. This Oryza sativa subsp. japonica (Rice) protein is Soluble starch synthase 2-1, chloroplastic/amyloplastic (SSII-1).